The chain runs to 681 residues: Auxin response factor 8 (681 aa).

Positions 120-222 form a DNA-binding region, TF-B3; it reads FAKTLTQSDA…DLHVGIRRAK (103 aa). 2 disordered regions span residues 474 to 518 and 534 to 577; these read LRRP…AKPP and SLSG…TSSE. Composition is skewed to polar residues over residues 534-555 and 564-577; these read SLSG…NTEK and GVIQ…TSSE. The PB1 domain occupies 595-675; sequence PGQCKVFIES…RRLTILTDAG (81 aa).

Belongs to the ARF family. In terms of assembly, homodimers and heterodimers. As to expression, expressed in roots, culms, leaves and young panicles.

The protein resides in the nucleus. In terms of biological role, auxin response factors (ARFs) are transcriptional factors that bind specifically to the DNA sequence 5'-TGTCTC-3' found in the auxin-responsive promoter elements (AuxREs). The polypeptide is Auxin response factor 8 (ARF8) (Oryza sativa subsp. japonica (Rice)).